Reading from the N-terminus, the 316-residue chain is Porphobilinogen deaminase (316 aa).

An S-(dipyrrolylmethanemethyl)cysteine modification is found at Cys245.

Belongs to the HMBS family. In terms of assembly, monomer. Dipyrromethane serves as cofactor.

The enzyme catalyses 4 porphobilinogen + H2O = hydroxymethylbilane + 4 NH4(+). The protein operates within porphyrin-containing compound metabolism; protoporphyrin-IX biosynthesis; coproporphyrinogen-III from 5-aminolevulinate: step 2/4. It functions in the pathway porphyrin-containing compound metabolism; chlorophyll biosynthesis. Functionally, tetrapolymerization of the monopyrrole PBG into the hydroxymethylbilane pre-uroporphyrinogen in several discrete steps. The polypeptide is Porphobilinogen deaminase (Prochlorococcus marinus (strain MIT 9312)).